The following is an 890-amino-acid chain: Protein translocase subunit SecA (890 aa).

Residues glutamine 86, 104–108 (GEGKT), and aspartate 493 contribute to the ATP site. Positions 851-872 (EASHGDGDAKKAPVVKKEESGR) are enriched in basic and acidic residues. The segment at 851-873 (EASHGDGDAKKAPVVKKEESGRN) is disordered. Residues cysteine 876, cysteine 878, cysteine 887, and cysteine 888 each coordinate Zn(2+).

Belongs to the SecA family. In terms of assembly, monomer and homodimer. Part of the essential Sec protein translocation apparatus which comprises SecA, SecYEG and auxiliary proteins SecDF. Other proteins may also be involved. It depends on Zn(2+) as a cofactor.

The protein resides in the cell membrane. The protein localises to the cytoplasm. The catalysed reaction is ATP + H2O + cellular proteinSide 1 = ADP + phosphate + cellular proteinSide 2.. Part of the Sec protein translocase complex. Interacts with the SecYEG preprotein conducting channel. Has a central role in coupling the hydrolysis of ATP to the transfer of proteins into and across the cell membrane, serving as an ATP-driven molecular motor driving the stepwise translocation of polypeptide chains across the membrane. The sequence is that of Protein translocase subunit SecA from Alkaliphilus oremlandii (strain OhILAs) (Clostridium oremlandii (strain OhILAs)).